Reading from the N-terminus, the 157-residue chain is 2-C-methyl-D-erythritol 2,4-cyclodiphosphate synthase (157 aa).

A divalent metal cation contacts are provided by D8 and H10. 4-CDP-2-C-methyl-D-erythritol 2-phosphate-binding positions include 8 to 10 and 34 to 35; these read DVH and HS. H42 provides a ligand contact to a divalent metal cation. 4-CDP-2-C-methyl-D-erythritol 2-phosphate contacts are provided by residues 56–58, 61–65, 132–135, and F139; these read DIG, FPDTD, and TTEE.

It belongs to the IspF family. In terms of assembly, homotrimer. It depends on a divalent metal cation as a cofactor.

The catalysed reaction is 4-CDP-2-C-methyl-D-erythritol 2-phosphate = 2-C-methyl-D-erythritol 2,4-cyclic diphosphate + CMP. It participates in isoprenoid biosynthesis; isopentenyl diphosphate biosynthesis via DXP pathway; isopentenyl diphosphate from 1-deoxy-D-xylulose 5-phosphate: step 4/6. Functionally, involved in the biosynthesis of isopentenyl diphosphate (IPP) and dimethylallyl diphosphate (DMAPP), two major building blocks of isoprenoid compounds. Catalyzes the conversion of 4-diphosphocytidyl-2-C-methyl-D-erythritol 2-phosphate (CDP-ME2P) to 2-C-methyl-D-erythritol 2,4-cyclodiphosphate (ME-CPP) with a corresponding release of cytidine 5-monophosphate (CMP). The sequence is that of 2-C-methyl-D-erythritol 2,4-cyclodiphosphate synthase from Clostridium botulinum (strain Eklund 17B / Type B).